Here is a 391-residue protein sequence, read N- to C-terminus: AN1-type zinc finger and UBX domain-containing protein DDB_G0268260 (391 aa).

Low complexity predominate over residues Met-1–Gln-16. Positions Met-1 to Arg-20 are disordered. AN1-type zinc fingers lie at residues Asp-26–Asn-74 and Ala-118–Ser-166. Residues Cys-32, Cys-37, Cys-47, Cys-50, Cys-55, His-58, His-64, Cys-66, Cys-124, Cys-129, Cys-139, Cys-142, Cys-147, His-150, His-156, and Cys-158 each coordinate Zn(2+). Positions Asn-185 to Asn-236 are enriched in low complexity. Residues Asn-185–Tyr-240 are disordered. In terms of domain architecture, UBX spans Ser-278–Met-356.

This chain is AN1-type zinc finger and UBX domain-containing protein DDB_G0268260, found in Dictyostelium discoideum (Social amoeba).